Consider the following 149-residue polypeptide: Flavodoxin YqcA (149 aa).

In terms of domain architecture, Flavodoxin-like spans 4–145; sequence IGIFVGTMYG…ESNPWVEQWG (142 aa). Residues 10-15 and 99-101 contribute to the FMN site; these read TMYGNS and NFC.

The protein belongs to the flavodoxin family. MioC subfamily. Monomer. Requires FMN as cofactor.

Functionally, probable electron transporter. The chain is Flavodoxin YqcA (yqcA) from Escherichia coli (strain K12).